Here is a 426-residue protein sequence, read N- to C-terminus: Dihydroorotase (426 aa).

Positions 55 and 57 each coordinate Zn(2+). Residues 57–59 and asparagine 89 contribute to the substrate site; that span reads HLR. Zn(2+)-binding residues include aspartate 147, histidine 174, histidine 233, and aspartate 306. Aspartate 306 is a catalytic residue. Substrate-binding positions include histidine 310 and 324-325; that span reads FG.

The protein belongs to the metallo-dependent hydrolases superfamily. DHOase family. Class I DHOase subfamily. It depends on Zn(2+) as a cofactor.

The enzyme catalyses (S)-dihydroorotate + H2O = N-carbamoyl-L-aspartate + H(+). It participates in pyrimidine metabolism; UMP biosynthesis via de novo pathway; (S)-dihydroorotate from bicarbonate: step 3/3. Catalyzes the reversible cyclization of carbamoyl aspartate to dihydroorotate. In Thermus aquaticus, this protein is Dihydroorotase.